The primary structure comprises 78 residues: Small ribosomal subunit protein bS18 (78 aa).

Belongs to the bacterial ribosomal protein bS18 family. Part of the 30S ribosomal subunit. Forms a tight heterodimer with protein bS6.

Its function is as follows. Binds as a heterodimer with protein bS6 to the central domain of the 16S rRNA, where it helps stabilize the platform of the 30S subunit. The sequence is that of Small ribosomal subunit protein bS18 from Levilactobacillus brevis (strain ATCC 367 / BCRC 12310 / CIP 105137 / JCM 1170 / LMG 11437 / NCIMB 947 / NCTC 947) (Lactobacillus brevis).